Consider the following 249-residue polypeptide: Coproheme decarboxylase (249 aa).

Residue Tyr145 is part of the active site. Fe-coproporphyrin III contacts are provided by residues 145 to 149 and His172; that span reads YPMAR.

This sequence belongs to the ChdC family. Type 1 subfamily. Fe-coproporphyrin III is required as a cofactor.

It carries out the reaction Fe-coproporphyrin III + 2 H2O2 + 2 H(+) = heme b + 2 CO2 + 4 H2O. It catalyses the reaction Fe-coproporphyrin III + H2O2 + H(+) = harderoheme III + CO2 + 2 H2O. The enzyme catalyses harderoheme III + H2O2 + H(+) = heme b + CO2 + 2 H2O. Its pathway is porphyrin-containing compound metabolism; protoheme biosynthesis. Functionally, involved in coproporphyrin-dependent heme b biosynthesis. Catalyzes the decarboxylation of Fe-coproporphyrin III (coproheme) to heme b (protoheme IX), the last step of the pathway. The reaction occurs in a stepwise manner with a three-propionate intermediate. The sequence is that of Coproheme decarboxylase from Oceanobacillus iheyensis (strain DSM 14371 / CIP 107618 / JCM 11309 / KCTC 3954 / HTE831).